We begin with the raw amino-acid sequence, 399 residues long: UDP-galactopyranose mutase (399 aa).

FAD contacts are provided by residues S25, 44 to 45, N52, and 71 to 72; these read EK and HI. S171, W175, Y200, N297, R306, and Y345 together coordinate UDP-alpha-D-galactose. R374 provides a ligand contact to FAD. Y380 lines the UDP-alpha-D-galactose pocket. 381–386 contributes to the FAD binding site; sequence IDMDRA.

It belongs to the UDP-galactopyranose/dTDP-fucopyranose mutase family. FAD serves as cofactor.

The catalysed reaction is UDP-alpha-D-galactose = UDP-alpha-D-galactofuranose. In terms of biological role, involved in the conversion of UDP-GalP into UDP-GalF through a 2-keto intermediate. This Mycoplasma pneumoniae (strain ATCC 29342 / M129 / Subtype 1) (Mycoplasmoides pneumoniae) protein is UDP-galactopyranose mutase (glf).